A 750-amino-acid chain; its full sequence is DDT domain-containing protein DDR4 (750 aa).

Residues 1-125 (MGSSSDIVPD…ITSLVPPPEP (125 aa)) form a disordered region. Low complexity predominate over residues 45-54 (RAQQRLQELQ). Over residues 55–77 (AAERKLKPPKKEYKREQHRRREE) the composition is skewed to basic and acidic residues. Positions 78 to 100 (VVEEDEDSEDDDQEDEENDGDDE) are enriched in acidic residues. In terms of domain architecture, DDT spans 133-192 (LRSMWELASVLNFLHVFRPLLKINAEFSAEEFETALLTPNDTLSDIHIPLLKAIPPVTRM). Disordered stretches follow at residues 450–505 (NGRS…TDFV) and 532–750 (LKKR…TDNS). The span at 451 to 471 (GRSTSSTHPTEPVNDTASGRS) shows a compositional bias: polar residues. The span at 545–585 (EGDEEKGDEEYKWDEDNAEYEEEEEEEEEEDSLSASEEDSD) shows a compositional bias: acidic residues. A compositionally biased stretch (basic and acidic residues) spans 595–606 (RRETKLRSRSND). Polar residues predominate over residues 688 to 707 (NADTTNGKENNQLNKSNGTT). Residues 741-750 (LKDDDKTDNS) are compositionally biased toward basic and acidic residues.

In terms of assembly, interacts (via the DDT domain) with CHR11 (via C-terminus).

It localises to the nucleus. In terms of biological role, probable transcription regulator. In Arabidopsis thaliana (Mouse-ear cress), this protein is DDT domain-containing protein DDR4.